The chain runs to 454 residues: Ribosomal protein uS12 methylthiotransferase RimO (454 aa).

The MTTase N-terminal domain maps to 14 to 125; the sequence is SKVAFSHVGC…IAKVLDRVEK (112 aa). [4Fe-4S] cluster is bound by residues cysteine 23, cysteine 59, cysteine 88, cysteine 163, cysteine 167, and cysteine 170. In terms of domain architecture, Radical SAM core spans 149-378; sequence DKNKFVAYLR…ISVQQNISKD (230 aa). A TRAM domain is found at 381-452; sequence QSYVGSKMKI…EYDLYGETIK (72 aa).

This sequence belongs to the methylthiotransferase family. RimO subfamily. It depends on [4Fe-4S] cluster as a cofactor.

The protein resides in the cytoplasm. It catalyses the reaction L-aspartate(89)-[ribosomal protein uS12]-hydrogen + (sulfur carrier)-SH + AH2 + 2 S-adenosyl-L-methionine = 3-methylsulfanyl-L-aspartate(89)-[ribosomal protein uS12]-hydrogen + (sulfur carrier)-H + 5'-deoxyadenosine + L-methionine + A + S-adenosyl-L-homocysteine + 2 H(+). Its function is as follows. Catalyzes the methylthiolation of an aspartic acid residue of ribosomal protein uS12. In Prochlorococcus marinus (strain MIT 9312), this protein is Ribosomal protein uS12 methylthiotransferase RimO.